A 370-amino-acid chain; its full sequence is Putative agmatine deiminase (370 aa).

Cysteine 361 serves as the catalytic Amidino-cysteine intermediate.

This sequence belongs to the agmatine deiminase family.

It catalyses the reaction agmatine + H2O = N-carbamoylputrescine + NH4(+). This chain is Putative agmatine deiminase, found in Shewanella baltica (strain OS223).